A 62-amino-acid polypeptide reads, in one-letter code: MSEIAKWLNTRFQLTLIPKENSNTEFVGPCIFREDGDNTKLFGFRTTLFYTYIGMQTCLLSE.

The protein resides in the mitochondrion. This is an uncharacterized protein from Marchantia polymorpha (Common liverwort).